The following is a 407-amino-acid chain: Chorismate synthase (407 aa).

NADP(+) contacts are provided by R40 and R46. FMN contacts are provided by residues R138–S140 and Q259–A260. The segment covering R275–M284 has biased composition (basic and acidic residues). The segment at R275 to G308 is disordered. Residues G303, K318 to T322, and R344 each bind FMN.

The protein belongs to the chorismate synthase family. Homotetramer. FMNH2 serves as cofactor.

The enzyme catalyses 5-O-(1-carboxyvinyl)-3-phosphoshikimate = chorismate + phosphate. Its pathway is metabolic intermediate biosynthesis; chorismate biosynthesis; chorismate from D-erythrose 4-phosphate and phosphoenolpyruvate: step 7/7. Functionally, catalyzes the anti-1,4-elimination of the C-3 phosphate and the C-6 proR hydrogen from 5-enolpyruvylshikimate-3-phosphate (EPSP) to yield chorismate, which is the branch point compound that serves as the starting substrate for the three terminal pathways of aromatic amino acid biosynthesis. This reaction introduces a second double bond into the aromatic ring system. The chain is Chorismate synthase from Mycobacterium marinum (strain ATCC BAA-535 / M).